Here is a 167-residue protein sequence, read N- to C-terminus: MATQSKKTLYDFTVKDAKGNDVDLSVYKGKVVLIVNVASKCGLTNNSYDELNQIYLKYKEKGFEILAFPCNQFGQQEPGTNEEIVDFVCTKFKSEFPIFDKIDVNGENAAPVYEFLKTGFYGILGGDIQWNFSKFLVDKNGQPVDCYYPTTSPLTVERDIQKLLGLL.

The active site involves C41.

The protein belongs to the glutathione peroxidase family.

It carries out the reaction 2 glutathione + H2O2 = glutathione disulfide + 2 H2O. May constitute a glutathione peroxidase-like protective system against oxidative stresses. The protein is Glutathione peroxidase 1 (GPXHA-1) of Helianthus annuus (Common sunflower).